The following is a 187-amino-acid chain: dCTP deaminase, dUMP-forming (187 aa).

DCTP contacts are provided by residues 99-104 (KSSIAR), Asp117, 125-127 (TLE), Gln146, Tyr159, Lys166, and Gln170. Glu127 functions as the Proton donor/acceptor in the catalytic mechanism.

The protein belongs to the dCTP deaminase family. As to quaternary structure, homotrimer.

The enzyme catalyses dCTP + 2 H2O = dUMP + NH4(+) + diphosphate. The protein operates within pyrimidine metabolism; dUMP biosynthesis; dUMP from dCTP: step 1/1. Functionally, bifunctional enzyme that catalyzes both the deamination of dCTP to dUTP and the hydrolysis of dUTP to dUMP without releasing the toxic dUTP intermediate. The protein is dCTP deaminase, dUMP-forming of Methanoculleus marisnigri (strain ATCC 35101 / DSM 1498 / JR1).